A 116-amino-acid chain; its full sequence is Protein RALF-like 33 (116 aa).

The signal sequence occupies residues 1–23 (MRGLSTKPVAIIIAILTVHFLFA). Residues 24–67 (AVTSQSSGDFVPIESKCNGTIAECSLSTAEEEFEMDSEINRRIL) constitute a propeptide, removed in mature form. N-linked (GlcNAc...) asparagine glycosylation occurs at Asn-41. Intrachain disulfides connect Cys-85–Cys-95 and Cys-108–Cys-114.

It belongs to the plant rapid alkalinization factor (RALF) family. Proteolytically cleaved, probably by S1P, a subtilisin-like serine protease (subtilase). As to expression, expressed in roots, stems, leaves and plants.

The protein resides in the secreted. Its function is as follows. Cell signaling peptide that may regulate plant stress, growth, and development. Mediates a rapid alkalinization of extracellular space by mediating a transient increase in the cytoplasmic Ca(2+) concentration leading to a calcium-dependent signaling events through a cell surface receptor and a concomitant activation of some intracellular mitogen-activated protein kinases. The sequence is that of Protein RALF-like 33 (RALFL33) from Arabidopsis thaliana (Mouse-ear cress).